We begin with the raw amino-acid sequence, 339 residues long: Ornithine carbamoyltransferase, catabolic (339 aa).

Carbamoyl phosphate contacts are provided by residues 57-60, Gln-84, Arg-108, and 135-138; these read STRT and HPTQ. Residues Asn-167, Asp-231, and 235 to 236 each bind L-ornithine; that span reads SM. Carbamoyl phosphate is bound by residues 274 to 275 and Arg-319; that span reads CL.

The protein belongs to the aspartate/ornithine carbamoyltransferase superfamily. OTCase family.

The protein resides in the cytoplasm. The catalysed reaction is carbamoyl phosphate + L-ornithine = L-citrulline + phosphate + H(+). It participates in amino-acid degradation; L-arginine degradation via ADI pathway; carbamoyl phosphate from L-arginine: step 2/2. In terms of biological role, reversibly catalyzes the transfer of the carbamoyl group from carbamoyl phosphate (CP) to the N(epsilon) atom of ornithine (ORN) to produce L-citrulline. This Enterococcus faecalis (strain ATCC 700802 / V583) protein is Ornithine carbamoyltransferase, catabolic (arcB).